Reading from the N-terminus, the 876-residue chain is DNA double-strand break repair Rad50 ATPase (876 aa).

ATP-binding positions include Arg-11, 31–37 (NGAGKTT), and Gln-139. Coiled coils occupy residues 188–528 (RERV…EDRL) and 575–710 (SGVE…RKER). Residues 387–484 (EETLQSEYEE…RLESVRRELE (98 aa)) enclose the Zinc-hook domain. 2 residues coordinate Zn(2+): Cys-432 and Cys-435.

This sequence belongs to the SMC family. RAD50 subfamily. Homodimer. Forms a heterotetramer composed of two Mre11 subunits and two Rad50 subunits. Zn(2+) is required as a cofactor.

Part of the Rad50/Mre11 complex, which is involved in the early steps of DNA double-strand break (DSB) repair. The complex may facilitate opening of the processed DNA ends to aid in the recruitment of HerA and NurA. Rad50 controls the balance between DNA end bridging and DNA resection via ATP-dependent structural rearrangements of the Rad50/Mre11 complex. The protein is DNA double-strand break repair Rad50 ATPase of Methanopyrus kandleri (strain AV19 / DSM 6324 / JCM 9639 / NBRC 100938).